A 396-amino-acid polypeptide reads, in one-letter code: Glyceraldehyde-3-phosphate dehydrogenase GAPA1, chloroplastic (396 aa).

A chloroplast-targeting transit peptide spans M1 to A60. Residues R71–I72, D95, and R140 each bind NADP(+). D-glyceraldehyde 3-phosphate contacts are provided by residues S212–T214, T243, R258, T271–G272, and R294. The active-site Nucleophile is C213. Position 376 (N376) interacts with NADP(+).

This sequence belongs to the glyceraldehyde-3-phosphate dehydrogenase family. Tetramer of either four A chains (GAPDH 2) or two A and two B chains (GAPDH 1). Expressed in leaves and stems.

It localises to the plastid. It is found in the chloroplast membrane. The protein localises to the chloroplast stroma. It catalyses the reaction D-glyceraldehyde 3-phosphate + phosphate + NADP(+) = (2R)-3-phospho-glyceroyl phosphate + NADPH + H(+). Its pathway is carbohydrate biosynthesis; Calvin cycle. Involved in the photosynthetic reductive pentose phosphate pathway (Calvin-Benson cycle). Catalyzes the reduction of 1,3-diphosphoglycerate by NADPH. The sequence is that of Glyceraldehyde-3-phosphate dehydrogenase GAPA1, chloroplastic (GAPA1) from Arabidopsis thaliana (Mouse-ear cress).